The primary structure comprises 197 residues: Holliday junction branch migration complex subunit RuvA (197 aa).

Residues 1 to 63 (MINKIHGKVI…ENELKLFGFL (63 aa)) are domain I. The segment at 64–139 (NSDEREIFKE…KLLINSELES (76 aa)) is domain II. Residue Ser-139 is a region of interest, flexible linker. The tract at residues 140 to 197 (TGLFRFKELEESIVSMGFDRKIVNSKIREAFNLAEFANLKDSEKEQFLFKEVLKRISN) is domain III.

Belongs to the RuvA family. In terms of assembly, homotetramer. Forms an RuvA(8)-RuvB(12)-Holliday junction (HJ) complex. HJ DNA is sandwiched between 2 RuvA tetramers; dsDNA enters through RuvA and exits via RuvB. An RuvB hexamer assembles on each DNA strand where it exits the tetramer. Each RuvB hexamer is contacted by two RuvA subunits (via domain III) on 2 adjacent RuvB subunits; this complex drives branch migration. In the full resolvosome a probable DNA-RuvA(4)-RuvB(12)-RuvC(2) complex forms which resolves the HJ.

It localises to the cytoplasm. The RuvA-RuvB-RuvC complex processes Holliday junction (HJ) DNA during genetic recombination and DNA repair, while the RuvA-RuvB complex plays an important role in the rescue of blocked DNA replication forks via replication fork reversal (RFR). RuvA specifically binds to HJ cruciform DNA, conferring on it an open structure. The RuvB hexamer acts as an ATP-dependent pump, pulling dsDNA into and through the RuvAB complex. HJ branch migration allows RuvC to scan DNA until it finds its consensus sequence, where it cleaves and resolves the cruciform DNA. In Borreliella burgdorferi (strain ATCC 35210 / DSM 4680 / CIP 102532 / B31) (Borrelia burgdorferi), this protein is Holliday junction branch migration complex subunit RuvA.